Reading from the N-terminus, the 713-residue chain is Phosphoribosylformylglycinamidine synthase subunit PurL (713 aa).

Positions 1–17 (MSLSPSDRELVTEELGR) are enriched in basic and acidic residues. The tract at residues 1–20 (MSLSPSDRELVTEELGREPT) is disordered. The active site involves His34. Tyr37 provides a ligand contact to ATP. Position 85 (Glu85) interacts with Mg(2+). Substrate is bound by residues 86-89 (SHNH) and Arg108. Catalysis depends on His87, which acts as the Proton acceptor. Asp109 is a Mg(2+) binding site. Residue Gln233 participates in substrate binding. Asp261 is a binding site for Mg(2+). A substrate-binding site is contributed by 305-307 (ESQ). 2 residues coordinate ATP: Asp480 and Gly517. Position 518 (Asn518) interacts with Mg(2+). Residue Ser520 coordinates substrate.

The protein belongs to the FGAMS family. Monomer. Part of the FGAM synthase complex composed of 1 PurL, 1 PurQ and 2 PurS subunits.

The protein resides in the cytoplasm. The catalysed reaction is N(2)-formyl-N(1)-(5-phospho-beta-D-ribosyl)glycinamide + L-glutamine + ATP + H2O = 2-formamido-N(1)-(5-O-phospho-beta-D-ribosyl)acetamidine + L-glutamate + ADP + phosphate + H(+). Its pathway is purine metabolism; IMP biosynthesis via de novo pathway; 5-amino-1-(5-phospho-D-ribosyl)imidazole from N(2)-formyl-N(1)-(5-phospho-D-ribosyl)glycinamide: step 1/2. Part of the phosphoribosylformylglycinamidine synthase complex involved in the purines biosynthetic pathway. Catalyzes the ATP-dependent conversion of formylglycinamide ribonucleotide (FGAR) and glutamine to yield formylglycinamidine ribonucleotide (FGAM) and glutamate. The FGAM synthase complex is composed of three subunits. PurQ produces an ammonia molecule by converting glutamine to glutamate. PurL transfers the ammonia molecule to FGAR to form FGAM in an ATP-dependent manner. PurS interacts with PurQ and PurL and is thought to assist in the transfer of the ammonia molecule from PurQ to PurL. The polypeptide is Phosphoribosylformylglycinamidine synthase subunit PurL (Natronomonas pharaonis (strain ATCC 35678 / DSM 2160 / CIP 103997 / JCM 8858 / NBRC 14720 / NCIMB 2260 / Gabara) (Halobacterium pharaonis)).